We begin with the raw amino-acid sequence, 105 residues long: Small ribosomal subunit protein uS10 (105 aa).

Belongs to the universal ribosomal protein uS10 family. Part of the 30S ribosomal subunit.

In terms of biological role, involved in the binding of tRNA to the ribosomes. In Rickettsia akari (strain Hartford), this protein is Small ribosomal subunit protein uS10.